A 191-amino-acid chain; its full sequence is MDDLLEELTADIDANAAISFAVTDLESVIESDGASDHADQPPDEGATQRYTDTPLTDDAVATMDGWLDNDQLHTISDAIVTEHIDEILLLLITVRDGACGKELLQDLRRLFGADLSPGTVYPHLNDLAVEGVLEVQKLSKRKVYRLSDPEGAFTRIDHMVDQLLLFSLVLKAVMTDCKARQSQSQGRETND.

The tract at residues 31–51 (SDGASDHADQPPDEGATQRYT) is disordered. DNA is bound at residue 140–145 (KRKVYR). Residues 150 to 181 (EGAFTRIDHMVDQLLLFSLVLKAVMTDCKARQ) form a leucine-zipper region.

As to quaternary structure, interacts with GvpD.

It is found in the cytoplasm. Its activity is regulated as follows. The amount of protein that accumulates is controlled by GvpD; GvpD causes a reduction in the amount of GvpE, preventing accumulation of excessive amounts of gas vesicles. In terms of biological role, plays a regulatory role in gas vesicle synthesis, activates transcription of the gvpA operon, and probably of the gvpD operon. Gas vesicles are hollow, gas filled proteinaceous nanostructures found in several microbial planktonic microorganisms. They allow positioning of halobacteria at the optimal depth for growth in the poorly aerated, shallow brine pools of their habitat. Its function is as follows. Expression of a 9.5 kb p-vac DNA fragment containing 2 divergently transcribed regions (gvpD-gvpE-gvpF-gvpG-gvpH-gvpI-gvpJ-gvpK-gvpL-gvpM and gvpA-gvpC-gvpN-gvpO) allows H.volcanii to produce gas vesicles. A similar region restores gas vesicle production in H.halobium without the p-vac locus, but it still has the c-vac locus. The polypeptide is Transcriptional activator GvpE1 (gvpE11) (Halobacterium salinarum (strain ATCC 700922 / JCM 11081 / NRC-1) (Halobacterium halobium)).